The primary structure comprises 340 residues: Extracellular matrix protein-binding protein emp (340 aa).

An N-terminal signal peptide occupies residues Met1–Ala26.

It localises to the cell surface. Adhesin that binds to the host cell extracellular matrix proteins fibronectin, fibrinogen, collagen, and vitronectin. The chain is Extracellular matrix protein-binding protein emp (emp) from Staphylococcus aureus (strain Mu50 / ATCC 700699).